We begin with the raw amino-acid sequence, 206 residues long: Ribosome maturation factor RimM (206 aa).

The PRC barrel domain maps to 113-206 (DDEYYWVDLI…RIDSNWPTEL (94 aa)).

The protein belongs to the RimM family. As to quaternary structure, binds ribosomal protein uS19.

It localises to the cytoplasm. An accessory protein needed during the final step in the assembly of 30S ribosomal subunit, possibly for assembly of the head region. Essential for efficient processing of 16S rRNA. May be needed both before and after RbfA during the maturation of 16S rRNA. It has affinity for free ribosomal 30S subunits but not for 70S ribosomes. This chain is Ribosome maturation factor RimM, found in Bordetella petrii (strain ATCC BAA-461 / DSM 12804 / CCUG 43448).